The sequence spans 443 residues: Nuclear pore complex-interacting protein family member B15 (443 aa).

The first 18 residues, 1 to 18, serve as a signal peptide directing secretion; that stretch reads MRLRFWLLIWLLLGFISH. N-linked (GlcNAc...) asparagine glycosylation occurs at Asn111. 2 disordered regions span residues 242–262 and 330–413; these read RMGRQPPPPTQQHSITDNSLS and SPLP…TRHC. Residues 252-262 are compositionally biased toward polar residues; the sequence is QQHSITDNSLS. Basic and acidic residues predominate over residues 351-393; the sequence is EAEKPPKPKRWRVDEVEQSPKPKRRRADEVEQSPKPKRQREAE. Positions 399-412 are enriched in basic residues; the sequence is KPKRRRLSKLRTRH.

It belongs to the NPIP family.

Its subcellular location is the secreted. The chain is Nuclear pore complex-interacting protein family member B15 (NPIPB15) from Homo sapiens (Human).